The primary structure comprises 309 residues: Xylose/arabinose import permease protein XacI (309 aa).

6 consecutive transmembrane segments (helical) span residues 29-49, 89-109, 121-141, 170-190, 227-247, and 282-302; these read LVVF…MTAI, LIMS…AAYG, MLML…VPLA, ELVP…TILF, MFGV…LFAF, and AAFL…EQFA. The ABC transmembrane type-1 domain maps to 85–297; that stretch reads FFNSLIMSIP…VPTLILYVAF (213 aa).

Belongs to the binding-protein-dependent transport system permease family. As to quaternary structure, the complex is composed of two ATP-binding proteins (XacJ and XacK), two transmembrane proteins (XacH and XacI) and a solute-binding protein (XacG).

Its subcellular location is the cell membrane. Functionally, part of the ABC transporter complex XacGHIJK involved in the uptake of xylose and arabinose. Responsible for the translocation of the substrate across the membrane. The sequence is that of Xylose/arabinose import permease protein XacI from Haloferax volcanii (strain ATCC 29605 / DSM 3757 / JCM 8879 / NBRC 14742 / NCIMB 2012 / VKM B-1768 / DS2) (Halobacterium volcanii).